The following is a 287-amino-acid chain: MAIRKFKPYTPGTRQRVVTDFSEITSAKPERSLIVPKHRVKGRNNRGVITCRHRGGGHKRQYRLVDFRRDKRNINAKVAAIHYDPHRNARLALLFYEDGEKRYIIAPAGVKVGQNVISGESVPIEDGNAMPLSVMPLGSSVHCVELYAGRGAQMVRSAGASAQVMAKEGDYVALKLPSTEVRLVRKECYATLGEVGNSEIRNTSLGKAGRRRWLGRRPQVRGSVMNPCDHPHGGGEGKAPIGRAGPVTPWGKPALGLKTRKKNKPSNKLVVRRRRRISKRSRGGRDS.

Positions 221 to 287 (RGSVMNPCDH…SKRSRGGRDS (67 aa)) are disordered. Basic residues predominate over residues 258–287 (KTRKKNKPSNKLVVRRRRRISKRSRGGRDS).

Belongs to the universal ribosomal protein uL2 family. As to quaternary structure, part of the 50S ribosomal subunit. Forms a bridge to the 30S subunit in the 70S ribosome.

One of the primary rRNA binding proteins. Required for association of the 30S and 50S subunits to form the 70S ribosome, for tRNA binding and peptide bond formation. It has been suggested to have peptidyltransferase activity; this is somewhat controversial. Makes several contacts with the 16S rRNA in the 70S ribosome. This chain is Large ribosomal subunit protein uL2, found in Prochlorococcus marinus (strain MIT 9215).